The chain runs to 420 residues: DNA repair protein RadA (420 aa).

62 to 69 is a binding site for ATP; that stretch reads GDPGIGKS. The RadA KNRFG motif motif lies at 218 to 222; it reads KNRFG. Residues 317 to 420 are lon-protease-like; it reads DAYLKSAGGV…IQEVLKKVFA (104 aa).

The protein belongs to the RecA family. RadA subfamily.

Functionally, plays a role in repairing double-strand DNA breaks, probably involving stabilizing or processing branched DNA or blocked replication forks. Required for efficient transformation with chromosomal (linear) DNA, but not for replicative plasmid DNA. Its increased sensitivity to a DNA damaging agent suggests it may be required for DNA repair. The sequence is that of DNA repair protein RadA from Streptococcus pneumoniae (strain ATCC BAA-255 / R6).